We begin with the raw amino-acid sequence, 704 residues long: Ion-translocating oxidoreductase complex subunit C (704 aa).

2 consecutive 4Fe-4S ferredoxin-type domains span residues 368–397 (MGAP…QQLY) and 407–436 (KATA…VQYF). [4Fe-4S] cluster contacts are provided by Cys377, Cys380, Cys383, Cys387, Cys416, Cys419, Cys422, and Cys426. Residues 536-685 (RAKQAAHPMA…ADPRKAAVAA (150 aa)) are disordered. Residues 556 to 565 (KAAVEAAIAR) show a composition bias toward low complexity.

This sequence belongs to the 4Fe4S bacterial-type ferredoxin family. RnfC subfamily. As to quaternary structure, the complex is composed of six subunits: RsxA, RsxB, RsxC, RsxD, RsxE and RsxG. [4Fe-4S] cluster serves as cofactor.

The protein localises to the cell inner membrane. Its function is as follows. Part of a membrane-bound complex that couples electron transfer with translocation of ions across the membrane. Required to maintain the reduced state of SoxR. The sequence is that of Ion-translocating oxidoreductase complex subunit C from Salmonella dublin (strain CT_02021853).